Reading from the N-terminus, the 155-residue chain is Small ribosomal subunit protein uS7 (155 aa).

The protein belongs to the universal ribosomal protein uS7 family. As to quaternary structure, part of the 30S ribosomal subunit. Contacts proteins S9 and S11.

Its function is as follows. One of the primary rRNA binding proteins, it binds directly to 16S rRNA where it nucleates assembly of the head domain of the 30S subunit. Is located at the subunit interface close to the decoding center, probably blocks exit of the E-site tRNA. This Thermosipho melanesiensis (strain DSM 12029 / CIP 104789 / BI429) protein is Small ribosomal subunit protein uS7.